The following is a 141-amino-acid chain: Endoribonuclease YbeY (141 aa).

The Zn(2+) site is built by His-105, His-109, and Asp-115.

It belongs to the endoribonuclease YbeY family. Zn(2+) serves as cofactor.

Its subcellular location is the cytoplasm. Its function is as follows. Single strand-specific metallo-endoribonuclease involved in late-stage 70S ribosome quality control and in maturation of the 3' terminus of the 16S rRNA. This chain is Endoribonuclease YbeY, found in Karelsulcia muelleri (strain GWSS) (Sulcia muelleri).